A 1604-amino-acid chain; its full sequence is E3 ubiquitin-protein ligase HECW1 (1604 aa).

In terms of domain architecture, C2 spans 182–318 (SAAPIFKGIG…LERHAIGDRV (137 aa)). Disordered regions lie at residues 350–539 (DEEI…CSLP), 572–604 (PSAQ…LSEV), 642–667 (GIGA…QQGA), and 727–826 (STVF…TIDE). A compositionally biased stretch (polar residues) spans 362 to 380 (SAETQDSIMNSMVGNSNGE). Residues 387 to 396 (EFCKDAKPES) show a composition bias toward basic and acidic residues. Residues 398–412 (SEGNGVNSSENQNQE) show a composition bias toward polar residues. Composition is skewed to acidic residues over residues 435-444 (APEEPGELQD) and 458-469 (EVAEGLPLDEDS). A compositionally biased stretch (basic and acidic residues) spans 494–505 (GAREEEMQKGKD). Acidic residues predominate over residues 580 to 589 (TEEEDGLEEE). The segment covering 590-601 (STLKESSEKDGL) has biased composition (basic and acidic residues). Composition is skewed to polar residues over residues 654–667 (STGS…QQGA), 748–762 (DSVQ…STNG), and 803–812 (HNSQPISQLP). The region spanning 826 to 859 (EPLPPNWEARIDSHGRVFYVDHINRTTTWQRPSM) is the WW 1 domain. Residue serine 871 is modified to Phosphoserine. A coiled-coil region spans residues 871 to 898 (SVHQMEQLNRRYQNIQRTMATERAEEDS). The segment at 890 to 936 (ATERAEEDSGNQNSEQIPDGGGGGGGGSDSEAESSQSSLDLRREGSL) is disordered. Gly residues predominate over residues 908–917 (DGGGGGGGGS). Residues serine 935 and serine 937 each carry the phosphoserine modification. The WW 2 domain occupies 1016 to 1049 (LELPRGWEIKTDHQGKSFFVDHNSRATTFIDPRI). Residues 1269–1604 (SRKELQRNKL…VEETSTFGLE (336 aa)) form the HECT domain. Catalysis depends on cysteine 1572, which acts as the Glycyl thioester intermediate.

As to quaternary structure, interacts with DVL1 and SSR3. Predominantly expressed in neurons of the spinal cord.

It localises to the cytoplasm. It catalyses the reaction S-ubiquitinyl-[E2 ubiquitin-conjugating enzyme]-L-cysteine + [acceptor protein]-L-lysine = [E2 ubiquitin-conjugating enzyme]-L-cysteine + N(6)-ubiquitinyl-[acceptor protein]-L-lysine.. The protein operates within protein modification; protein ubiquitination. Functionally, E3 ubiquitin-protein ligase that mediates ubiquitination and subsequent degradation of DVL1. The polypeptide is E3 ubiquitin-protein ligase HECW1 (Hecw1) (Mus musculus (Mouse)).